Reading from the N-terminus, the 102-residue chain is NADH-quinone oxidoreductase subunit K (102 aa).

A run of 3 helical transmembrane segments spans residues 5–25, 30–50, and 62–82; these read LAHY…GIFV, IIVI…NLVA, and IFAM…LAIL.

Belongs to the complex I subunit 4L family. NDH-1 is composed of 14 different subunits. Subunits NuoA, H, J, K, L, M, N constitute the membrane sector of the complex.

The protein localises to the cell inner membrane. It carries out the reaction a quinone + NADH + 5 H(+)(in) = a quinol + NAD(+) + 4 H(+)(out). Functionally, NDH-1 shuttles electrons from NADH, via FMN and iron-sulfur (Fe-S) centers, to quinones in the respiratory chain. The immediate electron acceptor for the enzyme in this species is believed to be ubiquinone. Couples the redox reaction to proton translocation (for every two electrons transferred, four hydrogen ions are translocated across the cytoplasmic membrane), and thus conserves the redox energy in a proton gradient. In Phenylobacterium zucineum (strain HLK1), this protein is NADH-quinone oxidoreductase subunit K.